We begin with the raw amino-acid sequence, 377 residues long: Pseudouridylate synthase RPUSD4, mitochondrial (377 aa).

The N-terminal 46 residues, 1–46 (MAAPCLRTPGVQLLSMSSRPGRLFTPGSWSFCSSATSSRPLNAQRL), are a transit peptide targeting the mitochondrion. The active site involves D153.

The protein belongs to the pseudouridine synthase RluA family. As to quaternary structure, interacts with 16S mt-rRNA, mt-tRNA(Phe) and mt-tRNA(Met). Forms a regulatory protein-RNA complex, consisting of RCC1L, NGRN, RPUSD3, RPUSD4, TRUB2, FASTKD2 and 16S mt-rRNA.

Its subcellular location is the mitochondrion matrix. It is found in the nucleus. The protein localises to the cytoplasm. The enzyme catalyses uridine in 5S rRNA = pseudouridine in 5S rRNA. It catalyses the reaction a uridine in tRNA = a pseudouridine in tRNA. It carries out the reaction a uridine in mRNA = a pseudouridine in mRNA. In terms of biological role, catalyzes uridine to pseudouridine isomerization (pseudouridylation) of different mitochondrial RNA substrates. Acts on position 1397 in 16S mitochondrial ribosomal RNA (16S mt-rRNA). This modification is required for the assembly of 16S mt-rRNA into a functional mitochondrial ribosome. As a component of a functional protein-RNA module, consisting of RCC1L, NGRN, RPUSD3, RPUSD4, TRUB2, FASTKD2 and 16S mt-rRNA, controls 16S mt-rRNA abundance and is required for intra-mitochondrial translation. Acts on position 39 in mitochondrial tRNA(Phe). Also catalyzes pseudouridylation of mRNAs in nucleus: acts as a regulator of pre-mRNA splicing by mediating pseudouridylation of pre-mRNAs at locations associated with alternatively spliced regions. Pseudouridylation of pre-mRNAs near splice sites directly regulates mRNA splicing and mRNA 3'-end processing. The chain is Pseudouridylate synthase RPUSD4, mitochondrial from Mus musculus (Mouse).